The sequence spans 344 residues: Putative glycosyltransferase EpsH (344 aa).

It belongs to the glycosyltransferase 2 family.

In terms of biological role, may be involved in the production of the exopolysaccharide (EPS) component of the extracellular matrix during biofilm formation. EPS is responsible for the adhesion of chains of cells into bundles. Required for biofilm maintenance. This chain is Putative glycosyltransferase EpsH (epsH), found in Bacillus subtilis (strain 168).